The chain runs to 153 residues: uncharacterized protein (153 aa).

The signal sequence occupies residues 1–18 (MSARISKQLRLSVPPCLA). Residues Asn-19 and Asn-25 are each glycosylated (N-linked (GlcNAc...) asparagine). Residues 19–43 (NRTTASNSSSCVTEVEPLLQSFSST) are Extracellular-facing. A helical membrane pass occupies residues 44–64 (LVLIVLATVIFCLVVLSLSTF). The Cytoplasmic portion of the chain corresponds to 65–153 (HMHKSKMKKR…EHLQQSVVLS (89 aa)). Residues 75–115 (KIEKAQEEYERDHCSPKAERGHLHGMGRGGTHGSPTSPTIQ) form a disordered region. The segment covering 77 to 96 (EKAQEEYERDHCSPKAERGH) has biased composition (basic and acidic residues).

The protein resides in the membrane. This is an uncharacterized protein from Xenopus tropicalis (Western clawed frog).